A 144-amino-acid chain; its full sequence is Globin (144 aa).

Ala-1 bears the N-acetylalanine mark. The Globin domain maps to 1 to 144; it reads ALSAADAGLL…IISALQSAGK (144 aa). His-95 is a heme b binding site.

It belongs to the globin family. As to quaternary structure, monomer.

The chain is Globin from Aplysia juliana (Walking sea hare).